The following is a 62-amino-acid chain: Large ribosomal subunit protein bL32 (62 aa).

Positions 28 to 62 (SIEPTTGEVHRRHHISPDGFYRGRQVIKAKEQDEE) are disordered.

It belongs to the bacterial ribosomal protein bL32 family.

This Thioalkalivibrio sulfidiphilus (strain HL-EbGR7) protein is Large ribosomal subunit protein bL32.